The sequence spans 298 residues: Fe(II)/2-oxoglutarate-dependent dioxygenase nvfF (298 aa).

3 residues coordinate Fe cation: His137, Asp139, and His212.

The protein belongs to the PhyH family. As to quaternary structure, homodimer. Fe cation serves as cofactor.

The enzyme catalyses fumigatonoid C + 2-oxoglutarate + O2 = novofumigatonin + succinate + CO2 + H2O. Its pathway is secondary metabolite biosynthesis; terpenoid biosynthesis. Its function is as follows. Fe(II)/2-oxoglutarate-dependent dioxygenase; part of the gene cluster that mediates the biosynthesis of novofumigatonin, a heavily oxygenated meroterpenoid containing a unique orthoester moiety. The first step of the pathway is the synthesis of 3,5-dimethylorsellinic acid (DMOA) by the polyketide synthase nvfA via condensation of one acetyl-CoA starter unit with 3 malonyl-CoA units and 2 methylations. DMOA is then converted to farnesyl-DMOA by the farnesyltransferase nvfB. Epoxydation by FAD-dependent monooxygenase nvfK, followed by a protonation-initiated cyclization catalyzed by the terpene cyclase nvfL leads to the production of asnavolin H. The short chain dehydrogenase nvfC then as a 3-OH dehydrogenase of asnovolin H to yield chemesin D. There are two branches to synthesize asnovolin A from chemesin D. In one branch, chemesin D undergoes Baeyer-Villiger oxidation by nvfH, methylation by nvfJ, and enoyl reduction by the nvfM D enoylreductase that reduces the double bond between C-5'and C-6', to form respectively asnovolin I, asnovolin K, and asnovolin A. In the other branch, the methylation precedes the Baeyer-Villiger oxidation and the enoyl reduction to yield asnovolin A via the asnovolin J intermediate. Asnovolin A is further converted to fumigatonoid A by the Fe(II)/2-oxoglutarate-dependent dioxygenase nvfI that catalyzes an endoperoxidation reaction. The alpha/beta hydrolase nvfD then acts as an epimerase that converts fumigatonoid A to its C-5' epimer, which then undergoes spontaneous or nvfD-catalyzed lactonization. The following step utilizes the ketoreductase nvfG to produce fumigatonoid B. The dioxygenase nvfE further converts fumigatonoid B into fumigatonoid C. Finally the Fe(II)/2-oxoglutarate-dependent dioxygenase nvfF catalyzes two rounds of oxidation to transform fumigatonoid C into the end product, novofumigatonin A. This chain is Fe(II)/2-oxoglutarate-dependent dioxygenase nvfF, found in Aspergillus novofumigatus (strain IBT 16806).